A 413-amino-acid chain; its full sequence is BSD domain-containing protein 1-A (413 aa).

Residues 146–198 (WLAYWDPEQRKAEISELLVTSPSIRALFTKMVPAAVSHSEFWQRYFYKVHQLE) enclose the BSD domain. Composition is skewed to basic and acidic residues over residues 208 to 219 (KQRADQSVHSEE) and 255 to 271 (HVEDKSEKTAELNRDHT). 2 disordered regions span residues 208 to 228 (KQRADQSVHSEEPTWEEEEED) and 255 to 386 (HVED…EFDM). The segment covering 274-287 (TSPSESSESISPIT) has biased composition (low complexity). The segment covering 297 to 322 (QTPSKEPSPGTLTVTKENTGAGTDET) has biased composition (polar residues). A compositionally biased stretch (basic and acidic residues) spans 342-352 (QREDPPSDLRV). Residues 356–375 (NSDSGKSTPSNNGQKGSSTD) are compositionally biased toward polar residues. Residues 376–386 (ISEDWEKEFDM) are compositionally biased toward acidic residues.

The chain is BSD domain-containing protein 1-A (bsdc1-a) from Xenopus laevis (African clawed frog).